We begin with the raw amino-acid sequence, 322 residues long: Ferredoxin--NADP reductase (322 aa).

7 residues coordinate FAD: Asp34, Gln42, Tyr47, Val87, Phe120, Asp279, and Thr320.

This sequence belongs to the ferredoxin--NADP reductase type 2 family. Homodimer. FAD is required as a cofactor.

The catalysed reaction is 2 reduced [2Fe-2S]-[ferredoxin] + NADP(+) + H(+) = 2 oxidized [2Fe-2S]-[ferredoxin] + NADPH. The chain is Ferredoxin--NADP reductase from Streptococcus pneumoniae serotype 2 (strain D39 / NCTC 7466).